Consider the following 500-residue polypeptide: Lysine--tRNA ligase (500 aa).

Mg(2+) contacts are provided by Glu410 and Glu417.

The protein belongs to the class-II aminoacyl-tRNA synthetase family. Homodimer. Mg(2+) is required as a cofactor.

Its subcellular location is the cytoplasm. It catalyses the reaction tRNA(Lys) + L-lysine + ATP = L-lysyl-tRNA(Lys) + AMP + diphosphate. The chain is Lysine--tRNA ligase from Shewanella sp. (strain ANA-3).